A 1137-amino-acid polypeptide reads, in one-letter code: Nonsense-mediated mRNA decay factor SMG7 (1137 aa).

Residue serine 2 is modified to N-acetylserine. TPR repeat units follow at residues 152-185 (QHCL…VPSN) and 187-219 (QPYN…KFPF). Phosphoserine is present on serine 520. The span at 620 to 631 (ELRKTPVSEARK) shows a compositional bias: basic and acidic residues. 6 disordered regions span residues 620–646 (ELRK…NSQF), 696–794 (LQPT…YQQA), 890–911 (IDRR…VPRM), 988–1055 (PSLP…AMGG), 1069–1089 (SSWH…PSME), and 1104–1137 (SSSM…NPPH). Threonine 624 bears the Phosphothreonine mark. 2 stretches are compositionally biased toward polar residues: residues 633-646 (PVTQ…NSQF) and 696-722 (LQPT…SQQR). Over residues 723–770 (PSGPGPMNQGPQQSQPPSQQPLTSLPAQPTAQSTSQLQVQALTQQQQS) the composition is skewed to low complexity. Residues serine 781 and serine 897 each carry the phosphoserine modification. Positions 988–998 (PSLPASSDHST) are enriched in polar residues. Residues 999–1025 (PASQSPHSSNPSSLPSSPPTHNHNSVP) show a composition bias toward low complexity. The span at 1036–1050 (DNRDRRTADRWKTDK) shows a compositional bias: basic and acidic residues. Positions 1069–1081 (SSWHQASTPSGTW) are enriched in polar residues. Over residues 1117–1131 (QLLMQQKQKQQRGQG) the composition is skewed to low complexity.

Part of a complex that contains SMG5, SMG7, PPP2CA, a short isoform of UPF3A (isoform UPF3AS, but not isoform UPF3AL) and phosphorylated UPF1. Interacts with DHX34; the interaction is RNA-independent.

The protein localises to the cytoplasm. The protein resides in the nucleus. Plays a role in nonsense-mediated mRNA decay. Recruits UPF1 to cytoplasmic mRNA decay bodies. Together with SMG5 is thought to provide a link to the mRNA degradation machinery involving exonucleolytic pathways, and to serve as an adapter for UPF1 to protein phosphatase 2A (PP2A), thereby triggering UPF1 dephosphorylation. In Homo sapiens (Human), this protein is Nonsense-mediated mRNA decay factor SMG7.